Reading from the N-terminus, the 284-residue chain is Ribosomal RNA small subunit methyltransferase A (284 aa).

S-adenosyl-L-methionine contacts are provided by Asn12, Leu14, Gly38, Glu59, Asp81, and Asn106.

It belongs to the class I-like SAM-binding methyltransferase superfamily. rRNA adenine N(6)-methyltransferase family. RsmA subfamily.

Its subcellular location is the cytoplasm. The enzyme catalyses adenosine(1518)/adenosine(1519) in 16S rRNA + 4 S-adenosyl-L-methionine = N(6)-dimethyladenosine(1518)/N(6)-dimethyladenosine(1519) in 16S rRNA + 4 S-adenosyl-L-homocysteine + 4 H(+). In terms of biological role, specifically dimethylates two adjacent adenosines (A1518 and A1519) in the loop of a conserved hairpin near the 3'-end of 16S rRNA in the 30S particle. May play a critical role in biogenesis of 30S subunits. The protein is Ribosomal RNA small subunit methyltransferase A of Phytoplasma australiense.